A 98-amino-acid chain; its full sequence is Large ribosomal subunit protein uL23 (98 aa).

It belongs to the universal ribosomal protein uL23 family. In terms of assembly, part of the 50S ribosomal subunit. Contacts protein L29, and trigger factor when it is bound to the ribosome.

One of the early assembly proteins it binds 23S rRNA. One of the proteins that surrounds the polypeptide exit tunnel on the outside of the ribosome. Forms the main docking site for trigger factor binding to the ribosome. The protein is Large ribosomal subunit protein uL23 of Bifidobacterium animalis subsp. lactis (strain AD011).